The chain runs to 105 residues: Antitoxin HigA-1 (105 aa).

Positions Leu15–Trp69 constitute an HTH cro/C1-type domain. Positions Ser27–Asn46 form a DNA-binding region, H-T-H motif.

In terms of biological role, antitoxin component of a type II toxin-antitoxin (TA) system that counteracts the effect of the HigB-1 toxin. Binds to its own promoter and regulates transcription of the higB-1/higA-1 operon. In Vibrio cholerae serotype O1 (strain ATCC 39315 / El Tor Inaba N16961), this protein is Antitoxin HigA-1 (higA-1).